Here is a 254-residue protein sequence, read N- to C-terminus: Alcohol dehydrogenase (254 aa).

10-33 (FVAGLGGIGLDTSREIVKSGPKNL) lines the NAD(+) pocket. Ser-138 lines the substrate pocket. Catalysis depends on Tyr-151, which acts as the Proton acceptor.

The protein belongs to the short-chain dehydrogenases/reductases (SDR) family. In terms of assembly, homodimer.

It carries out the reaction a primary alcohol + NAD(+) = an aldehyde + NADH + H(+). The catalysed reaction is a secondary alcohol + NAD(+) = a ketone + NADH + H(+). The chain is Alcohol dehydrogenase (Adh) from Drosophila hawaiiensis (Fruit fly).